Here is a 336-residue protein sequence, read N- to C-terminus: Protein REVEILLE 7-like (336 aa).

An HTH myb-type domain is found at 60 to 114 (TVTKQREKWSEEEHDRFLEAIKLYGRGWRQIQEHIGTKTAVQIRSHAQKFFSKMA). Residues 87 to 110 (WRQIQEHIGTKTAVQIRSHAQKFF) constitute a DNA-binding region (H-T-H motif). Residues 114–197 (AQEADSRSEG…KQPFKDDSDI (84 aa)) form a disordered region. Basic residues predominate over residues 134–144 (RPKRKPAHPYP). Residues 145-158 (RKSPVPYTQSPPPN) show a composition bias toward pro residues. Residues 167–189 (KSPTSVLSSFGSEDQNNYTTSKQ) show a composition bias toward polar residues.

It is found in the nucleus. Its function is as follows. Probable transcription factor. The polypeptide is Protein REVEILLE 7-like (RVE7L) (Arabidopsis thaliana (Mouse-ear cress)).